The following is a 473-amino-acid chain: Uronate isomerase (473 aa).

The protein belongs to the metallo-dependent hydrolases superfamily. Uronate isomerase family.

It carries out the reaction D-glucuronate = D-fructuronate. It catalyses the reaction aldehydo-D-galacturonate = keto-D-tagaturonate. It participates in carbohydrate metabolism; pentose and glucuronate interconversion. The sequence is that of Uronate isomerase (uxaC) from Geobacillus stearothermophilus (Bacillus stearothermophilus).